Reading from the N-terminus, the 213-residue chain is Adenylate kinase (213 aa).

10–15 (GSGKGT) serves as a coordination point for ATP. The interval 30-59 (SVGDLLRNIISSSSELGKKIKGTVESGNLI) is NMP. Residues Arg36, 57–59 (NLI), 83–86 (GFPR), and Gln90 contribute to the AMP site. An LID region spans residues 125 to 160 (NRLACLDCKNIYSVSSFKSTTCAKCKSTRLEKRIDD). Arg126 is an ATP binding site. Residues Cys129 and Cys132 each contribute to the Zn(2+) site. Position 135-136 (135-136 (IY)) interacts with ATP. Residues Cys146 and Cys149 each contribute to the Zn(2+) site. The AMP site is built by Arg157 and Arg169. Residue Leu195 participates in ATP binding.

The protein belongs to the adenylate kinase family. In terms of assembly, monomer.

Its subcellular location is the cytoplasm. It carries out the reaction AMP + ATP = 2 ADP. Its pathway is purine metabolism; AMP biosynthesis via salvage pathway; AMP from ADP: step 1/1. Functionally, catalyzes the reversible transfer of the terminal phosphate group between ATP and AMP. Plays an important role in cellular energy homeostasis and in adenine nucleotide metabolism. This chain is Adenylate kinase, found in Wolbachia pipientis wMel.